Consider the following 310-residue polypeptide: Ribosomal RNA small subunit methyltransferase H (310 aa).

Residues 33–35 (AGH), D53, F79, D100, and Q107 contribute to the S-adenosyl-L-methionine site.

This sequence belongs to the methyltransferase superfamily. RsmH family.

It is found in the cytoplasm. The catalysed reaction is cytidine(1402) in 16S rRNA + S-adenosyl-L-methionine = N(4)-methylcytidine(1402) in 16S rRNA + S-adenosyl-L-homocysteine + H(+). Functionally, specifically methylates the N4 position of cytidine in position 1402 (C1402) of 16S rRNA. The protein is Ribosomal RNA small subunit methyltransferase H of Clostridium tetani (strain Massachusetts / E88).